The primary structure comprises 90 residues: Probable Fe(2+)-trafficking protein (90 aa).

Belongs to the Fe(2+)-trafficking protein family.

Its function is as follows. Could be a mediator in iron transactions between iron acquisition and iron-requiring processes, such as synthesis and/or repair of Fe-S clusters in biosynthetic enzymes. The sequence is that of Probable Fe(2+)-trafficking protein from Photobacterium profundum (strain SS9).